We begin with the raw amino-acid sequence, 181 residues long: ATP synthase subunit b 2 (181 aa).

Over residues 1 to 12 (MAEGHGTTAHTG) the composition is skewed to low complexity. The segment at 1 to 20 (MAEGHGTTAHTGAEGGHKAP) is disordered. A helical transmembrane segment spans residues 33–53 (LVSLLIAFVALYLIVSKVALP).

The protein belongs to the ATPase B chain family. F-type ATPases have 2 components, F(1) - the catalytic core - and F(0) - the membrane proton channel. F(1) has five subunits: alpha(3), beta(3), gamma(1), delta(1), epsilon(1). F(0) has three main subunits: a(1), b(2) and c(10-14). The alpha and beta chains form an alternating ring which encloses part of the gamma chain. F(1) is attached to F(0) by a central stalk formed by the gamma and epsilon chains, while a peripheral stalk is formed by the delta and b chains.

The protein localises to the cell inner membrane. F(1)F(0) ATP synthase produces ATP from ADP in the presence of a proton or sodium gradient. F-type ATPases consist of two structural domains, F(1) containing the extramembraneous catalytic core and F(0) containing the membrane proton channel, linked together by a central stalk and a peripheral stalk. During catalysis, ATP synthesis in the catalytic domain of F(1) is coupled via a rotary mechanism of the central stalk subunits to proton translocation. Functionally, component of the F(0) channel, it forms part of the peripheral stalk, linking F(1) to F(0). The b'-subunit is a diverged and duplicated form of b found in plants and photosynthetic bacteria. The protein is ATP synthase subunit b 2 (atpF2) of Rhodopseudomonas palustris (strain BisA53).